The following is a 219-amino-acid chain: Peptidyl-tRNA hydrolase (219 aa).

TRNA is bound at residue Tyr26. Residue His31 is the Proton acceptor of the active site. Residues Tyr78, Asn80, and Asn126 each contribute to the tRNA site.

Belongs to the PTH family. Monomer.

The protein resides in the cytoplasm. The enzyme catalyses an N-acyl-L-alpha-aminoacyl-tRNA + H2O = an N-acyl-L-amino acid + a tRNA + H(+). Functionally, hydrolyzes ribosome-free peptidyl-tRNAs (with 1 or more amino acids incorporated), which drop off the ribosome during protein synthesis, or as a result of ribosome stalling. In terms of biological role, catalyzes the release of premature peptidyl moieties from peptidyl-tRNA molecules trapped in stalled 50S ribosomal subunits, and thus maintains levels of free tRNAs and 50S ribosomes. This chain is Peptidyl-tRNA hydrolase, found in Trichodesmium erythraeum (strain IMS101).